The primary structure comprises 281 residues: MTMEALQFLLAAPPGAYDPVARTIEDEPRPSQPPTSALALDIRGLRKSFGDNDVLRGIDLHIPAGQFVTIVGRSGCGKSTLLRLIAGLETPTAGHIVFGEDKLPGDVRVMFQEPRLLPWARVLANVEVGLGTERNSPDARARADAALIEVGLDDKRGEWPAVLSGGQKQRVALARALVSRPRVLAFDEPLGALDALTRIAMQRLLEQVWQAQGFTAILVTHDVAEAVALADRVLVIEDGRIAKDLPIDLPRPRQRGSAELAALEGEILRDLLKGAEDTFEL.

In terms of domain architecture, ABC transporter spans 40-263 (LDIRGLRKSF…QRGSAELAAL (224 aa)). 72 to 79 (GRSGCGKS) is an ATP binding site.

It belongs to the ABC transporter superfamily. Aliphatic sulfonates importer (TC 3.A.1.17.2) family. As to quaternary structure, the complex is composed of two ATP-binding proteins (SsuB), two transmembrane proteins (SsuC) and a solute-binding protein (SsuA).

It localises to the cell inner membrane. The catalysed reaction is ATP + H2O + aliphatic sulfonate-[sulfonate-binding protein]Side 1 = ADP + phosphate + aliphatic sulfonateSide 2 + [sulfonate-binding protein]Side 1.. Functionally, part of the ABC transporter complex SsuABC involved in aliphatic sulfonates import. Responsible for energy coupling to the transport system. The polypeptide is Aliphatic sulfonates import ATP-binding protein SsuB (Rhodopseudomonas palustris (strain ATCC BAA-98 / CGA009)).